The following is a 238-amino-acid chain: MRTLFVGDLHLSTDRPDITQAFLRFLDTQLHDTDALYILGDLFEVWVGDDIAEPFAEQLAKAIYQASQKLPIFFIHGNRDFLISNAFAKRSGMTLLPEIYTVDLYGIPTVILHGDSLCTLDKPYQRFRKFRNLGWAKWLYAHLPKSKRLDIAVKLRSKSQSSNQQKSYSIMDVEPDAVLELLNATKTEQMIHGHTHRPAIHQLANGRRRIVVGDWYEQGSMLSVSQDKIELIELPFGK.

The Mn(2+) site is built by Asp-8, His-10, Asp-41, Asn-78, and His-113. 78-79 contributes to the substrate binding site; sequence NR. Substrate-binding residues include Asp-121, Ser-159, Asn-163, Lys-166, and His-194. 2 residues coordinate Mn(2+): His-194 and His-196.

Belongs to the LpxH family. Mn(2+) is required as a cofactor.

It is found in the cell inner membrane. The catalysed reaction is UDP-2-N,3-O-bis[(3R)-3-hydroxytetradecanoyl]-alpha-D-glucosamine + H2O = 2-N,3-O-bis[(3R)-3-hydroxytetradecanoyl]-alpha-D-glucosaminyl 1-phosphate + UMP + 2 H(+). The protein operates within glycolipid biosynthesis; lipid IV(A) biosynthesis; lipid IV(A) from (3R)-3-hydroxytetradecanoyl-[acyl-carrier-protein] and UDP-N-acetyl-alpha-D-glucosamine: step 4/6. Functionally, hydrolyzes the pyrophosphate bond of UDP-2,3-diacylglucosamine to yield 2,3-diacylglucosamine 1-phosphate (lipid X) and UMP by catalyzing the attack of water at the alpha-P atom. Involved in the biosynthesis of lipid A, a phosphorylated glycolipid that anchors the lipopolysaccharide to the outer membrane of the cell. This is UDP-2,3-diacylglucosamine hydrolase from Shewanella halifaxensis (strain HAW-EB4).